A 102-amino-acid polypeptide reads, in one-letter code: Probable endoribonuclease MazF2 (102 aa).

The protein belongs to the PemK/MazF family. Forms a complex with cognate antitoxin MazE2.

Toxic component of a type II toxin-antitoxin (TA) system. Acts as an endoribonuclease. Neutralized by coexpression with cognate antitoxin MazE2. The chain is Probable endoribonuclease MazF2 (mazF2) from Mycobacterium tuberculosis (strain CDC 1551 / Oshkosh).